Reading from the N-terminus, the 424-residue chain is Inhibin beta A chain (424 aa).

A signal peptide spans 1 to 20 (MPLLWLRGFLLASCWIIVRS). The propeptide occupies 21-308 (SPTPGSEGPG…EDHPHRRRRR (288 aa)). Asn165 carries an N-linked (GlcNAc...) asparagine glycan. Residues 257 to 288 (KKKKKEEEGEGKKKDGGDGGAGADEDKEQSHR) are disordered. Residues 261–273 (KEEEGEGKKKDGG) are compositionally biased toward basic and acidic residues. 4 disulfide bridges follow: Cys312-Cys320, Cys319-Cys389, Cys348-Cys421, and Cys352-Cys423.

The protein belongs to the TGF-beta family. Dimeric, linked by one or more disulfide bonds. Inhibin A is a dimer of alpha/INHA and beta-A/INHBA. Activin A is a homodimer of beta-A/INHBA. Activin AB is a dimer of beta-A/INHBA and beta-B/INHBB. Interacts with FST and FSTL3; these interactions prevent activin A interaction to its type II receptor. Activin A interacts with ACVR2A. Activin A interacts with BMPR2. Inhibin A interacts with ACVR1; this interaction creates a non-signaling complex (NSC) that inhibits ACVR1-mediated BMP signaling. Inhibin A interacts with ACVR2A.

The protein resides in the secreted. Inhibins/activins are involved in regulating a number of diverse functions such as hypothalamic and pituitary hormone secretion, gonadal hormone secretion, germ cell development and maturation, erythroid differentiation, insulin secretion, nerve cell survival, embryonic axial development or bone growth, depending on their subunit composition. In terms of biological role, activin A is a homodimer of INHBA that plays a role in several essential biological processes including embryonic development, stem cell maintenance and differentiation, haematopoiesis, cell proliferation and tissue fibrosis. Signals through type I (such as ACVR1B or ACVR1C) and type II receptors (such as ACVR2A, ACVR2B or BMPR2) which, upon ligand binding, phosphorylate SMAD2 and SMAD3 intracellular signaling mediators that form a complex with SMAD4, translocate to the nucleus and modulate gene expression. Can also activate alternative non-canonical intracellular signaling pathways including the p38 MAPK, extracellular signal-regulated kinases 1/2 (ERK1/2) and c-Jun N-terminal kinases (JNKs) to modulate cell migration and differentiation. Alternatively, promotes osteoblastic differentiation via ACVRL1-SMAD1/5/9 pathway. In addition, can engage the type I receptor ACVR1 to form an ACVR1-activin A-type II receptor non-signaling complex (NSC) that renders receptors unavailable for engagement with BMPs, hence resulting in an apparent inhibition of ACVR1-mediated BMP signaling. Functionally, inhibin A is a dimer of alpha/INHA and beta-A/INHBA that functions as a feedback regulator in the hypothalamic-pituitary-gonadal (HPG) axis. Inhibits the secretion of FSH from the anterior pituitary gland by acting on pituitary gonadotrope cells. Antagonizes activin A by binding to the proteoglycan, betaglycan, and forming a stable complex with and, thereby, sequestering type II activin receptors while excluding type I receptor. The polypeptide is Inhibin beta A chain (INHBA) (Felis catus (Cat)).